The primary structure comprises 504 residues: Histidine--tRNA ligase (504 aa).

Belongs to the class-II aminoacyl-tRNA synthetase family. As to quaternary structure, homodimer.

The protein resides in the cytoplasm. It carries out the reaction tRNA(His) + L-histidine + ATP = L-histidyl-tRNA(His) + AMP + diphosphate + H(+). The sequence is that of Histidine--tRNA ligase (hisS) from Rhizobium meliloti (strain 1021) (Ensifer meliloti).